Consider the following 135-residue polypeptide: S-protein homolog 20 (135 aa).

A signal peptide spans 1-26; it reads MNGSSAFHIILSVTFMVFLFGGLCEA. Asparagine 88 carries N-linked (GlcNAc...) asparagine glycosylation.

The protein belongs to the plant self-incompatibility (S1) protein family.

The protein localises to the secreted. The sequence is that of S-protein homolog 20 from Arabidopsis thaliana (Mouse-ear cress).